The primary structure comprises 285 residues: Bifunctional protein FolD (285 aa).

NADP(+)-binding positions include 163 to 165, S188, and A231; that span reads GRS.

The protein belongs to the tetrahydrofolate dehydrogenase/cyclohydrolase family. Homodimer.

The catalysed reaction is (6R)-5,10-methylene-5,6,7,8-tetrahydrofolate + NADP(+) = (6R)-5,10-methenyltetrahydrofolate + NADPH. The enzyme catalyses (6R)-5,10-methenyltetrahydrofolate + H2O = (6R)-10-formyltetrahydrofolate + H(+). The protein operates within one-carbon metabolism; tetrahydrofolate interconversion. Catalyzes the oxidation of 5,10-methylenetetrahydrofolate to 5,10-methenyltetrahydrofolate and then the hydrolysis of 5,10-methenyltetrahydrofolate to 10-formyltetrahydrofolate. This Oenococcus oeni (strain ATCC BAA-331 / PSU-1) protein is Bifunctional protein FolD.